The sequence spans 195 residues: Lipid A acyltransferase PagP (195 aa).

The signal sequence occupies residues 1 to 30 (MRLTLTSRSRLFVLSSLLFISTFDVLSAQA). Active-site residues include histidine 67, aspartate 110, and serine 111.

It belongs to the lipid A palmitoyltransferase family. Homodimer.

The protein resides in the cell outer membrane. It carries out the reaction a lipid A + a 1,2-diacyl-sn-glycero-3-phosphocholine = a hepta-acyl lipid A + a 2-acyl-sn-glycero-3-phosphocholine. It catalyses the reaction a lipid IVA + a 1,2-diacyl-sn-glycero-3-phosphocholine = a lipid IVB + a 2-acyl-sn-glycero-3-phosphocholine. The enzyme catalyses a lipid IIA + a 1,2-diacyl-sn-glycero-3-phosphocholine = a lipid IIB + a 2-acyl-sn-glycero-3-phosphocholine. Functionally, transfers a fatty acid residue from the sn-1 position of a phospholipid to the N-linked hydroxyfatty acid chain on the proximal unit of lipid A or its precursors. This is Lipid A acyltransferase PagP from Dickeya chrysanthemi (strain Ech1591) (Dickeya zeae (strain Ech1591)).